The chain runs to 308 residues: Protein UL135 (308 aa).

The first 22 residues, 1-22 (MVWLWLGVGLLGGTGLASLVLA), serve as a signal peptide directing secretion. The disordered stretch occupies residues 105 to 274 (KPEFPPARFE…TEPTTLPIVS (170 aa)). Residues 126–145 (SIGRSPSHCSSSSSLSSSAS) are compositionally biased toward low complexity. Composition is skewed to pro residues over residues 152 to 163 (QPPPSWKPPPPP) and 219 to 238 (PVTP…PRNP).

This sequence belongs to the HCMV UL135 family. In terms of assembly, interacts with host components of the WAVE2 complex ABI1, NAP1 and WAVE2. Also interacts with host ABI2 and TLN1.

The protein resides in the host cell membrane. It is found in the host Golgi apparatus. In terms of biological role, remodels the host actin cytoskeleton in order to impair immune recognition of infected cells. Mechanistically, interacts with members of the host WAVE2 complex and redirects the complex to the plasma membrane. In turn, the efficiency of immune synapse formation is greatly reduced. This is Protein UL135 (UL135) from Human cytomegalovirus (strain Merlin) (HHV-5).